Consider the following 498-residue polypeptide: Cytotardin (498 aa).

Residues 18-58 (DRVHSKDELQALNTRLAKYIDKIRNLENENVALQRQLQTAE) form a coil 1A region. Residues 22 to 378 (SKDELQALNT…KLLSGEEQRL (357 aa)) form the IF rod domain. The segment at 59-69 (QTTVTEIHRVS) is linker 1. The segment at 70-213 (KNYDEELAKL…ENLREEKSQR (144 aa)) is coil 1B. A linker 2 region spans residues 214–231 (QYLLHDLQRGLQDEFESK). The tract at residues 232–371 (LVQQLNELRA…AELATYNKLL (140 aa)) is coil 2. Residues 381–425 (DGSGTVIRRPTGGATGTGSGIYGGTGSGGYSRDIGSTTTTKTTYT) are disordered. Residues 393–409 (GATGTGSGIYGGTGSGG) are compositionally biased toward gly residues.

It belongs to the intermediate filament family.

The protein resides in the cytoplasm. Its subcellular location is the cell cortex. In terms of biological role, intermediate filament (IF) protein that forms both short filaments and extensive cytoskeletal networks which most likely are homomeric. Some of the cytotardin arrays display cage-like perinuclear structures, while others are located in the periphery close to the cell membrane. The entire tardigrade body is ensheathed by a grid of belt-like filaments formed by the cytotardin protein, which retain their integrity even in contracted specimens. The belt-like structures encircling each epidermal cell might help to resist the shearing forces that arise during freezing and thawing cycles, whereas the dense meshwork at the basis of each claw and around the stylets might provide the tissue stability necessary for locomotion and feeding. The chain is Cytotardin from Hypsibius exemplaris (Freshwater tardigrade).